The chain runs to 190 residues: MIGNLRGIVDEVCSDHIILNVNDVGYIVYLSAKTLSACSIGSRVKLLIDTYANSRENVTQLYGFISKEEQQCLRLLVKVSGVSYKTAMSILSKLTPEQLFLAIINEDKLALKVSGLGLKLINRIITELNGKVSKLEINNNHFHSISEDALSALINLGYERTKAYDTIKKIEDESPNLDTKDIIRMALKTI.

Positions 1-65 (MIGNLRGIVD…ENVTQLYGFI (65 aa)) are domain I. Residues 66–143 (SKEEQQCLRL…KLEINNNHFH (78 aa)) are domain II. A flexible linker region spans residues 144–147 (SISE). Positions 147-190 (EDALSALINLGYERTKAYDTIKKIEDESPNLDTKDIIRMALKTI) are domain III.

It belongs to the RuvA family. Homotetramer. Forms an RuvA(8)-RuvB(12)-Holliday junction (HJ) complex. HJ DNA is sandwiched between 2 RuvA tetramers; dsDNA enters through RuvA and exits via RuvB. An RuvB hexamer assembles on each DNA strand where it exits the tetramer. Each RuvB hexamer is contacted by two RuvA subunits (via domain III) on 2 adjacent RuvB subunits; this complex drives branch migration. In the full resolvosome a probable DNA-RuvA(4)-RuvB(12)-RuvC(2) complex forms which resolves the HJ.

Its subcellular location is the cytoplasm. Its function is as follows. The RuvA-RuvB-RuvC complex processes Holliday junction (HJ) DNA during genetic recombination and DNA repair, while the RuvA-RuvB complex plays an important role in the rescue of blocked DNA replication forks via replication fork reversal (RFR). RuvA specifically binds to HJ cruciform DNA, conferring on it an open structure. The RuvB hexamer acts as an ATP-dependent pump, pulling dsDNA into and through the RuvAB complex. HJ branch migration allows RuvC to scan DNA until it finds its consensus sequence, where it cleaves and resolves the cruciform DNA. The protein is Holliday junction branch migration complex subunit RuvA of Wolbachia pipientis subsp. Culex pipiens (strain wPip).